A 342-amino-acid polypeptide reads, in one-letter code: Organic solute transporter alpha-like protein 2 (342 aa).

The Extracellular portion of the chain corresponds to 1 to 50 (MLEISPWETLVKLLTDSLLNCTGTHEDVPHAKTFLRSLTTTYIASLAVAT). Asparagine 20 carries an N-linked (GlcNAc...) asparagine glycan. The helical transmembrane segment at 51–71 (AVTVGTVCLAVLHLIYIHFYI) threads the bilayer. At 72 to 79 (THSSRRLH) the chain is on the cytoplasmic side. A helical membrane pass occupies residues 80 to 100 (IVLLACTAPLVSLLALVAMYM). Topologically, residues 101–109 (PRVWFLSHL) are extracellular. A helical transmembrane segment spans residues 110–130 (LSFLYFSFALWVIICLLLHIF). Residues 131-176 (DGHHALVTKMMQRLQYVEIATPPFCCLFPCLPKVRLEGKKIRWCEL) are Cytoplasmic-facing. A helical transmembrane segment spans residues 177 to 197 (MVMQAPIVRLFATLVSLVIYF). Residues 198 to 208 (EYQDQGLVPLK) lie on the Extracellular side of the membrane. A helical membrane pass occupies residues 209 to 229 (VLDFITLPSLLAGIYGTHILV). Residues 230-243 (TTVSRMDELISYRY) are Cytoplasmic-facing. Residues 244–264 (VVVFRLLDFFFMVFGLQQPVF) traverse the membrane as a helical segment. Over 265–290 (DFLARYGAFGCGTVLPAIETSFYWKN) the chain is Extracellular. Residues 291-311 (FFTVIEAFCVTLISTVLLQPS) traverse the membrane as a helical segment. The Cytoplasmic segment spans residues 312 to 342 (KSSFFDKHPSCRSMSSARSTITDVDTDESTT).

The protein belongs to the OST-alpha family.

Its subcellular location is the cell membrane. Functionally, probable transporter. The chain is Organic solute transporter alpha-like protein 2 (osta-2) from Caenorhabditis elegans.